Reading from the N-terminus, the 347-residue chain is Heat-inducible transcription repressor HrcA (347 aa).

This sequence belongs to the HrcA family.

Negative regulator of class I heat shock genes (grpE-dnaK-dnaJ and groELS operons). Prevents heat-shock induction of these operons. This chain is Heat-inducible transcription repressor HrcA, found in Lactococcus lactis subsp. cremoris (strain SK11).